The following is a 187-amino-acid chain: Adenylate kinase (187 aa).

10–15 lines the ATP pocket; sequence GSGKGT. The NMP stretch occupies residues 30 to 59; the sequence is STGDLLRSEVVAGTPLGLQAKQVMAQGDLV. AMP is bound by residues T31, R36, 57 to 59, 85 to 88, and Q92; these read DLV and GYPR. The tract at residues 126–136 is LID; the sequence is GRAQAEGREDD. Position 127 (R127) interacts with ATP. AMP contacts are provided by R133 and R144. G172 is an ATP binding site.

The protein belongs to the adenylate kinase family. Monomer.

Its subcellular location is the cytoplasm. It catalyses the reaction AMP + ATP = 2 ADP. Its pathway is purine metabolism; AMP biosynthesis via salvage pathway; AMP from ADP: step 1/1. Its function is as follows. Catalyzes the reversible transfer of the terminal phosphate group between ATP and AMP. Plays an important role in cellular energy homeostasis and in adenine nucleotide metabolism. The polypeptide is Adenylate kinase (Xylella fastidiosa (strain 9a5c)).